Consider the following 788-residue polypeptide: Ribonucleoside-diphosphate reductase large subunit (788 aa).

The ATP-cone domain maps to T7–K98. ATP contacts are provided by residues K11–R12, E17–K23, T59, and D63. Residues S208 and S223 each contribute to the GDP site. A disulfide bridge connects residues C224 and C450. Residues D232 to I234, K249, R262, and A269 to G270 each bind dTTP. Position 433 (N433) interacts with GDP. N433 functions as the Proton acceptor in the catalytic mechanism. C435 acts as the Cysteine radical intermediate in catalysis. GDP-binding positions include E437 and T610–T613. Residue E437 is the Proton acceptor of the active site.

It belongs to the ribonucleoside diphosphate reductase large chain family. Heterodimer of a large and a small subunit.

It carries out the reaction a 2'-deoxyribonucleoside 5'-diphosphate + [thioredoxin]-disulfide + H2O = a ribonucleoside 5'-diphosphate + [thioredoxin]-dithiol. Under complex allosteric control mediated by deoxynucleoside triphosphates and ATP binding to separate specificity and activation sites on the large subunit. The type of nucleotide bound at the specificity site determines substrate preference. It seems probable that ATP makes the enzyme reduce CDP and UDP, dGTP favors ADP reduction and dTTP favors GDP reduction. Stimulated by ATP and inhibited by dATP binding to the activity site. Provides the precursors necessary for DNA synthesis. Catalyzes the biosynthesis of deoxyribonucleotides from the corresponding ribonucleotides. This Caenorhabditis elegans protein is Ribonucleoside-diphosphate reductase large subunit (rnr-1).